We begin with the raw amino-acid sequence, 61 residues long: UPF0434 protein Bpet2671 (61 aa).

This sequence belongs to the UPF0434 family.

The chain is UPF0434 protein Bpet2671 from Bordetella petrii (strain ATCC BAA-461 / DSM 12804 / CCUG 43448).